The following is a 556-amino-acid chain: ATP synthase subunit beta-1, mitochondrial (556 aa).

The span at 1–20 (MASRRVLSSLLRSSSGRSAA) shows a compositional bias: low complexity. The segment at 1–37 (MASRRVLSSLLRSSSGRSAAKLGNRNPRLPSPSPARH) is disordered. The N-terminal 51 residues, 1-51 (MASRRVLSSLLRSSSGRSAAKLGNRNPRLPSPSPARHAAPCSYLLGRVAEY), are a transit peptide targeting the mitochondrion. Phosphoserine is present on Ser59. 231 to 238 (GGAGVGKT) contacts ATP.

It belongs to the ATPase alpha/beta chains family. In terms of assembly, F-type ATPases have 2 components, CF(1) - the catalytic core - and CF(0) - the membrane proton channel. CF(1) has five subunits: alpha(3), beta(3), gamma(1), delta(1), epsilon(1). CF(0) has three main subunits: a, b and c.

The protein localises to the mitochondrion. It is found in the mitochondrion inner membrane. The catalysed reaction is ATP + H2O + 4 H(+)(in) = ADP + phosphate + 5 H(+)(out). Functionally, mitochondrial membrane ATP synthase (F(1)F(0) ATP synthase or Complex V) produces ATP from ADP in the presence of a proton gradient across the membrane which is generated by electron transport complexes of the respiratory chain. F-type ATPases consist of two structural domains, F(1) - containing the extramembraneous catalytic core, and F(0) - containing the membrane proton channel, linked together by a central stalk and a peripheral stalk. During catalysis, ATP synthesis in the catalytic domain of F(1) is coupled via a rotary mechanism of the central stalk subunits to proton translocation. Subunits alpha and beta form the catalytic core in F(1). Rotation of the central stalk against the surrounding alpha(3)beta(3) subunits leads to hydrolysis of ATP in three separate catalytic sites on the beta subunits. In Arabidopsis thaliana (Mouse-ear cress), this protein is ATP synthase subunit beta-1, mitochondrial.